A 130-amino-acid polypeptide reads, in one-letter code: S-protein homolog 30 (130 aa).

N-linked (GlcNAc...) asparagine glycosylation is found at Asn-64 and Asn-77.

Belongs to the plant self-incompatibility (S1) protein family.

It is found in the secreted. This is S-protein homolog 30 from Arabidopsis thaliana (Mouse-ear cress).